The following is a 186-amino-acid chain: Ribosomal RNA small subunit methyltransferase G (186 aa).

S-adenosyl-L-methionine is bound by residues Gly-59, Phe-64, 110–111 (IE), and Arg-124.

This sequence belongs to the methyltransferase superfamily. RNA methyltransferase RsmG family.

The protein localises to the cytoplasm. The enzyme catalyses guanosine(527) in 16S rRNA + S-adenosyl-L-methionine = N(7)-methylguanosine(527) in 16S rRNA + S-adenosyl-L-homocysteine. In terms of biological role, specifically methylates the N7 position of guanine in position 527 of 16S rRNA. The sequence is that of Ribosomal RNA small subunit methyltransferase G from Campylobacter curvus (strain 525.92).